The primary structure comprises 146 residues: Flagellar assembly factor FliW (146 aa).

The protein belongs to the FliW family. Interacts with translational regulator CsrA and flagellin(s).

It localises to the cytoplasm. Acts as an anti-CsrA protein, binds CsrA and prevents it from repressing translation of its target genes, one of which is flagellin. Binds to flagellin and participates in the assembly of the flagellum. This is Flagellar assembly factor FliW from Azoarcus sp. (strain BH72).